Here is an 89-residue protein sequence, read N- to C-terminus: Large ribosomal subunit protein bL27 (89 aa).

A disordered region spans residues 1–22 (MAHKKAGGSSRNGRDSESKRLG).

This sequence belongs to the bacterial ribosomal protein bL27 family.

The protein is Large ribosomal subunit protein bL27 of Rhizobium etli (strain CIAT 652).